The chain runs to 88 residues: UPF0335 protein M446_5200 (88 aa).

It belongs to the UPF0335 family.

The protein is UPF0335 protein M446_5200 of Methylobacterium sp. (strain 4-46).